Reading from the N-terminus, the 213-residue chain is Small ribosomal subunit protein uS7 (213 aa).

Belongs to the universal ribosomal protein uS7 family. Component of the small ribosomal subunit (SSU). Mature N.crassa ribosomes consist of a small (40S) and a large (60S) subunit. The 40S small subunit contains 1 molecule of ribosomal RNA (18S rRNA) and at least 32 different proteins. The large 60S subunit contains 3 rRNA molecules (26S, 5.8S and 5S rRNA) and at least 42 different proteins.

The protein localises to the cytoplasm. Component of the ribosome, a large ribonucleoprotein complex responsible for the synthesis of proteins in the cell. The small ribosomal subunit (SSU) binds messenger RNAs (mRNAs) and translates the encoded message by selecting cognate aminoacyl-transfer RNA (tRNA) molecules. The large subunit (LSU) contains the ribosomal catalytic site termed the peptidyl transferase center (PTC), which catalyzes the formation of peptide bonds, thereby polymerizing the amino acids delivered by tRNAs into a polypeptide chain. The nascent polypeptides leave the ribosome through a tunnel in the LSU and interact with protein factors that function in enzymatic processing, targeting, and the membrane insertion of nascent chains at the exit of the ribosomal tunnel. The protein is Small ribosomal subunit protein uS7 (rps-5) of Neurospora crassa (strain ATCC 24698 / 74-OR23-1A / CBS 708.71 / DSM 1257 / FGSC 987).